A 340-amino-acid polypeptide reads, in one-letter code: GTP 3',8-cyclase (340 aa).

The Radical SAM core domain occupies 8 to 227 (KLGRPIRDLR…EMIEQNFDIE (220 aa)). Residue Arg17 participates in GTP binding. Cys24 and Cys28 together coordinate [4Fe-4S] cluster. Tyr30 contacts S-adenosyl-L-methionine. A [4Fe-4S] cluster-binding site is contributed by Cys31. Arg71 is a GTP binding site. S-adenosyl-L-methionine is bound at residue Gly75. Position 102 (Thr102) interacts with GTP. Residue Ser126 coordinates S-adenosyl-L-methionine. Lys163 provides a ligand contact to GTP. S-adenosyl-L-methionine is bound at residue Met197. The [4Fe-4S] cluster site is built by Cys261 and Cys264. 266–268 (RAR) contributes to the GTP binding site. Cys278 contributes to the [4Fe-4S] cluster binding site.

Belongs to the radical SAM superfamily. MoaA family. Monomer and homodimer. [4Fe-4S] cluster serves as cofactor.

The catalysed reaction is GTP + AH2 + S-adenosyl-L-methionine = (8S)-3',8-cyclo-7,8-dihydroguanosine 5'-triphosphate + 5'-deoxyadenosine + L-methionine + A + H(+). The protein operates within cofactor biosynthesis; molybdopterin biosynthesis. Functionally, catalyzes the cyclization of GTP to (8S)-3',8-cyclo-7,8-dihydroguanosine 5'-triphosphate. The sequence is that of GTP 3',8-cyclase from Staphylococcus saprophyticus subsp. saprophyticus (strain ATCC 15305 / DSM 20229 / NCIMB 8711 / NCTC 7292 / S-41).